Reading from the N-terminus, the 769-residue chain is Discoidin, CUB and LCCL domain-containing protein 2 (769 aa).

Over residues 1 to 29 the composition is skewed to low complexity; that stretch reads MASRAPLRAARSPQDPGGRAAPAATGRAP. The disordered stretch occupies residues 1-39; the sequence is MASRAPLRAARSPQDPGGRAAPAATGRAPLPSAGWCPLP. Positions 1–63 are cleaved as a signal peptide; the sequence is MASRAPLRAA…LLLLLPDAGA (63 aa). The Extracellular portion of the chain corresponds to 64–523; that stretch reads QKGDGCGHTV…VTPSVTKDVA (460 aa). 2 cysteine pairs are disulfide-bonded: Cys69-Cys96 and Cys123-Cys145. The region spanning 69–184 is the CUB domain; it reads CGHTVLGPES…RGFLASYSVI (116 aa). Asn92 carries an N-linked (GlcNAc...) asparagine glycan. N-linked (GlcNAc...) asparagine glycosylation is present at Asn152. The LCCL domain occupies 184–282; that stretch reads IDKQDLITCL…MVGYLSTSLF (99 aa). Cysteines 212 and 234 form a disulfide. Asn269 carries an N-linked (GlcNAc...) asparagine glycan. Cys289 and Cys446 are oxidised to a cystine. An F5/8 type C domain is found at 289–446; that stretch reads CYGTLGMESG…IAMKVELLGC (158 aa). The tract at residues 455 to 476 is disordered; that stretch reads PKLTQPPPPRNSNNLKNTTVHP. The segment covering 465–474 has biased composition (polar residues); the sequence is NSNNLKNTTV. N-linked (GlcNAc...) asparagine glycosylation is found at Asn471 and Asn511. The helical transmembrane segment at 524–544 threads the bilayer; sequence LAAVLVPVLVMALTTLILILV. The Cytoplasmic portion of the chain corresponds to 545–769; it reads CAWHWRNRKK…EKFDAFKETL (225 aa). Residue Ser601 is modified to Phosphoserine. Residues 719 to 769 are disordered; it reads SCSSGQAQYDTPKGGKPAAAPEELVYQVPQSTQEASGAGRDEKFDAFKETL. Basic and acidic residues predominate over residues 757–769; sequence GRDEKFDAFKETL.

The protein localises to the membrane. In Rattus norvegicus (Rat), this protein is Discoidin, CUB and LCCL domain-containing protein 2 (Dcbld2).